A 142-amino-acid chain; its full sequence is Large ribosomal subunit protein uL11 (142 aa).

Belongs to the universal ribosomal protein uL11 family. In terms of assembly, part of the ribosomal stalk of the 50S ribosomal subunit. Interacts with L10 and the large rRNA to form the base of the stalk. L10 forms an elongated spine to which L12 dimers bind in a sequential fashion forming a multimeric L10(L12)X complex. Post-translationally, one or more lysine residues are methylated.

In terms of biological role, forms part of the ribosomal stalk which helps the ribosome interact with GTP-bound translation factors. The protein is Large ribosomal subunit protein uL11 of Yersinia pestis bv. Antiqua (strain Angola).